The following is a 614-amino-acid chain: Kelch-like protein 40 (614 aa).

Positions Ile33–Glu100 constitute a BTB domain. The 103-residue stretch at Cys135–Glu237 folds into the BACK domain. Kelch repeat units lie at residues Gln353–Asn405, Ser406–Asn455, Leu456–Gly503, Ile505–Gly550, and Leu552–Leu606.

This sequence belongs to the KLHL40 family. Component of the BCR(KLHL40) E3 ubiquitin ligase complex.

It localises to the cytoplasm. Its subcellular location is the myofibril. It is found in the sarcomere. The protein localises to the a band. The protein resides in the i band. Its function is as follows. Substrate-specific adapter of a BCR (BTB-CUL3-RBX1) E3 ubiquitin ligase complex that acts as a key regulator of skeletal muscle development. The protein is Kelch-like protein 40 (klhl40) of Xenopus tropicalis (Western clawed frog).